A 147-amino-acid polypeptide reads, in one-letter code: D-aminoacyl-tRNA deacylase (147 aa).

The Gly-cisPro motif, important for rejection of L-amino acids signature appears at Gly-137–Pro-138.

It belongs to the DTD family. In terms of assembly, homodimer.

It is found in the cytoplasm. It catalyses the reaction glycyl-tRNA(Ala) + H2O = tRNA(Ala) + glycine + H(+). It carries out the reaction a D-aminoacyl-tRNA + H2O = a tRNA + a D-alpha-amino acid + H(+). An aminoacyl-tRNA editing enzyme that deacylates mischarged D-aminoacyl-tRNAs. Also deacylates mischarged glycyl-tRNA(Ala), protecting cells against glycine mischarging by AlaRS. Acts via tRNA-based rather than protein-based catalysis; rejects L-amino acids rather than detecting D-amino acids in the active site. By recycling D-aminoacyl-tRNA to D-amino acids and free tRNA molecules, this enzyme counteracts the toxicity associated with the formation of D-aminoacyl-tRNA entities in vivo and helps enforce protein L-homochirality. In Bacillus pumilus (strain SAFR-032), this protein is D-aminoacyl-tRNA deacylase.